We begin with the raw amino-acid sequence, 1019 residues long: Photoactivated adenylate cyclase subunit alpha (1019 aa).

Residues 55 to 148 (LRRLMYLSAS…GRMYGEWHMK (94 aa)) enclose the BLUF 1 domain. One can recognise a Guanylate cyclase 1 domain in the interval 204–332 (VVTFIYLVEF…DCINTASRIT (129 aa)). Residues 467 to 559 (LITLTYISQA…RVYGSPLDMT (93 aa)) form the BLUF 2 domain. A Guanylate cyclase 2 domain is found at 615-744 (VMLATDICSF…EVSARVMEVE (130 aa)). Residues 822–861 (GTNAPGRGAPAGGIPSSPKVRPPGRTNSVSSYTPDPNEAL) are disordered. A compositionally biased stretch (low complexity) spans 825-839 (APGRGAPAGGIPSSP). A compositionally biased stretch (polar residues) spans 846–855 (RTNSVSSYTP).

It belongs to the adenylyl cyclase class-4/guanylyl cyclase family. As to quaternary structure, heterotetramer of two alpha and two beta subunits. Requires FAD as cofactor.

The protein localises to the cell projection. Its subcellular location is the cilium. It localises to the flagellum. It catalyses the reaction ATP = 3',5'-cyclic AMP + diphosphate. Its activity is regulated as follows. Activity increased by up to 80-fold under blue light. Its function is as follows. Acts as a blue light photoreceptor for the step-up photophobic response. Mediates photoavoidance. The chain is Photoactivated adenylate cyclase subunit alpha from Euglena gracilis.